The sequence spans 277 residues: Cis-3,4-dihydrophenanthrene-3,4-diol dehydrogenase (277 aa).

Residues 10–37 (FLTGGVAGLGRALVKRLVEEGANVTVLD) and aspartate 60 contribute to the NAD(+) site. Serine 143 is a binding site for substrate. Catalysis depends on tyrosine 156, which acts as the Proton acceptor. NAD(+) is bound at residue lysine 160.

The protein belongs to the short-chain dehydrogenases/reductases (SDR) family. In terms of assembly, homotetramer.

The enzyme catalyses (3S,4R)-3,4-dihydrophenanthrene-3,4-diol + NAD(+) = phenanthrene-3,4-diol + NADH + H(+). Its activity is regulated as follows. Inhibited by heavy metal such as Hg(2+) and by p-chloromercuribenzoate. In terms of biological role, involved in the degradation of phenanthrene. Catalyzes the oxidation of cis-phenanthrene dihydrodiol (PDD) to yield phenanthrenediol. It can use either NAD or NADP as electron acceptor, however NAD is preferred to NADP. The protein is Cis-3,4-dihydrophenanthrene-3,4-diol dehydrogenase (phnB) of Alcaligenes faecalis.